Reading from the N-terminus, the 232-residue chain is Probable fimbrial chaperone LpfB (232 aa).

A signal peptide spans 1 to 24 (MDRMMKSKFVALALSLFLSQSVLA).

The protein belongs to the periplasmic pilus chaperone family.

It is found in the periplasm. Functionally, part of the lpfABCC'DE fimbrial operon. LP fimbriae may participate in the interaction with eukaryotic cells by assisting in microcolony formation. The chain is Probable fimbrial chaperone LpfB (lpfB) from Escherichia coli O157:H7.